The sequence spans 346 residues: tRNA N6-adenosine threonylcarbamoyltransferase (346 aa).

Positions 111 and 115 each coordinate Fe cation. Residues 134–138 (LVSGG), Asp167, Gly180, and Asn279 each bind substrate. Asp307 lines the Fe cation pocket.

The protein belongs to the KAE1 / TsaD family. It depends on Fe(2+) as a cofactor.

The protein resides in the cytoplasm. It carries out the reaction L-threonylcarbamoyladenylate + adenosine(37) in tRNA = N(6)-L-threonylcarbamoyladenosine(37) in tRNA + AMP + H(+). Required for the formation of a threonylcarbamoyl group on adenosine at position 37 (t(6)A37) in tRNAs that read codons beginning with adenine. Is involved in the transfer of the threonylcarbamoyl moiety of threonylcarbamoyl-AMP (TC-AMP) to the N6 group of A37, together with TsaE and TsaB. TsaD likely plays a direct catalytic role in this reaction. The sequence is that of tRNA N6-adenosine threonylcarbamoyltransferase from Burkholderia mallei (strain ATCC 23344).